The sequence spans 1197 residues: DNA-directed RNA polymerase subunit beta (1197 aa).

Over residues 581–597 the composition is skewed to polar residues; sequence QANSPLNDDGSFTNPTV. Disordered stretches follow at residues 581 to 603 and 1172 to 1197; these read QANS…RHGD and EKPD…EENV.

The protein belongs to the RNA polymerase beta chain family. As to quaternary structure, the RNAP catalytic core consists of 2 alpha, 1 beta, 1 beta' and 1 omega subunit. When a sigma factor is associated with the core the holoenzyme is formed, which can initiate transcription.

It catalyses the reaction RNA(n) + a ribonucleoside 5'-triphosphate = RNA(n+1) + diphosphate. DNA-dependent RNA polymerase catalyzes the transcription of DNA into RNA using the four ribonucleoside triphosphates as substrates. In Oenococcus oeni (strain ATCC BAA-331 / PSU-1), this protein is DNA-directed RNA polymerase subunit beta.